A 580-amino-acid chain; its full sequence is NADH-quinone oxidoreductase subunit C/D (580 aa).

Residues Met-1 to Phe-171 are NADH dehydrogenase I subunit C. An NADH dehydrogenase I subunit D region spans residues Glu-195 to Arg-580.

It in the N-terminal section; belongs to the complex I 30 kDa subunit family. The protein in the C-terminal section; belongs to the complex I 49 kDa subunit family. As to quaternary structure, NDH-1 is composed of 13 different subunits. Subunits NuoB, CD, E, F, and G constitute the peripheral sector of the complex.

It is found in the cell inner membrane. The catalysed reaction is a quinone + NADH + 5 H(+)(in) = a quinol + NAD(+) + 4 H(+)(out). Its function is as follows. NDH-1 shuttles electrons from NADH, via FMN and iron-sulfur (Fe-S) centers, to quinones in the respiratory chain. The immediate electron acceptor for the enzyme in this species is believed to be ubiquinone. Couples the redox reaction to proton translocation (for every two electrons transferred, four hydrogen ions are translocated across the cytoplasmic membrane), and thus conserves the redox energy in a proton gradient. This is NADH-quinone oxidoreductase subunit C/D from Cereibacter sphaeroides (strain ATCC 17025 / ATH 2.4.3) (Rhodobacter sphaeroides).